A 136-amino-acid chain; its full sequence is Large ribosomal subunit protein uL16 (136 aa).

The protein belongs to the universal ribosomal protein uL16 family. In terms of assembly, part of the 50S ribosomal subunit.

In terms of biological role, binds 23S rRNA and is also seen to make contacts with the A and possibly P site tRNAs. The polypeptide is Large ribosomal subunit protein uL16 (Pseudoalteromonas atlantica (strain T6c / ATCC BAA-1087)).